The sequence spans 366 residues: Phenylalanine dehydrogenase (366 aa).

Residue arginine 45 participates in NAD(+) binding. Lysine 69 is an L-phenylalanine binding site. Lysine 81 is a catalytic residue. Residues aspartate 116, threonine 151, 181–187, 204–205, 241–242, and 262–264 contribute to the NAD(+) site; these read GVGKVGE, DI, AK, and SAN. Asparagine 264 is an L-phenylalanine binding site.

The protein belongs to the Glu/Leu/Phe/Val dehydrogenases family.

It carries out the reaction L-phenylalanine + NAD(+) + H2O = 3-phenylpyruvate + NH4(+) + NADH + H(+). Its pathway is amino-acid biosynthesis; L-phenylalanine biosynthesis; L-phenylalanine from phenylpyruvate (PDH route): step 1/1. Its function is as follows. Catalyzes the reversible NAD(+)-dependent oxidative deamination of L-phenylalanine to phenylpyruvate. This chain is Phenylalanine dehydrogenase, found in Thermoactinomyces intermedius.